Here is a 291-residue protein sequence, read N- to C-terminus: 4,5:9,10-diseco-3-hydroxy-5,9,17-trioxoandrosta-1(10),2-diene-4-oate hydrolase (291 aa).

Residues 45–46 (GG), asparagine 54, asparagine 113, leucine 115, and arginine 192 each bind substrate. Residue histidine 269 is the Proton acceptor of the active site. Substrate is bound at residue tryptophan 270.

It belongs to the AB hydrolase superfamily. HsaD family. In terms of assembly, homodimer.

It catalyses the reaction (1E,2Z)-3-hydroxy-5,9,17-trioxo-4,5:9,10-disecoandrosta-1(10),2-dien-4-oate + H2O = 3-[(3aS,4S,7aS)-7a-methyl-1,5-dioxo-octahydro-1H-inden-4-yl]propanoate + (2Z,4Z)-2-hydroxyhexa-2,4-dienoate + H(+). The catalysed reaction is 2,6-dioxo-6-phenylhexa-3-enoate + H2O = 2-oxopent-4-enoate + benzoate + H(+). Its pathway is lipid metabolism; steroid biosynthesis. Catalyzes the hydrolysis of a carbon-carbon bond in 4,5: 9,10-diseco-3-hydroxy-5,9,17-trioxoandrosta-1(10),2-diene-4-oate (4,9-DSHA) to yield 9,17-dioxo-1,2,3,4,10,19-hexanorandrostan-5-oate (DOHNAA) and 2-hydroxy-hexa-2,4-dienoate (HHD). Is also able to catalyze the hydrolysis of 2-hydroxy-6-oxo-6-phenylhexa-2,4-dienoic acid (HOPDA) and the synthetic analog 8-(2-chlorophenyl)-2-hydroxy-5-methyl-6-oxoocta-2,4-dienoic acid (HOPODA). In Mycobacterium tuberculosis (strain ATCC 25618 / H37Rv), this protein is 4,5:9,10-diseco-3-hydroxy-5,9,17-trioxoandrosta-1(10),2-diene-4-oate hydrolase (hsaD).